The following is a 145-amino-acid chain: 3-hydroxyacyl-[acyl-carrier-protein] dehydratase FabZ (145 aa).

His49 is an active-site residue.

This sequence belongs to the thioester dehydratase family. FabZ subfamily.

It is found in the cytoplasm. It catalyses the reaction a (3R)-hydroxyacyl-[ACP] = a (2E)-enoyl-[ACP] + H2O. Involved in unsaturated fatty acids biosynthesis. Catalyzes the dehydration of short chain beta-hydroxyacyl-ACPs and long chain saturated and unsaturated beta-hydroxyacyl-ACPs. This chain is 3-hydroxyacyl-[acyl-carrier-protein] dehydratase FabZ, found in Rickettsia africae (strain ESF-5).